A 1450-amino-acid polypeptide reads, in one-letter code: Phospholipase B1, membrane-associated (1450 aa).

An N-terminal signal peptide occupies residues 1 to 27 (MESWPGVSLVGLLLLLLLGQGPSQIHG). Residues 28-1422 (SSGENTSQPQ…KAKENSNTLY (1395 aa)) are Extracellular-facing. Residues N32, N45, and N179 are each glycosylated (N-linked (GlcNAc...) asparagine). Tandem repeats lie at residues 41 to 351 (RTLK…YRNS), 366 to 711 (MKEG…TKNS), and 712 to 1058 (NLGH…FRNS). Positions 41–1407 (RTLKNFSFPC…NPFLYTVRNS (1367 aa)) are 4 X 308-326 AA approximate repeats. Residues S404, D518, and H659 contribute to the active site. Residue N699 is glycosylated (N-linked (GlcNAc...) asparagine). A compositionally biased stretch (polar residues) spans 708–720 (TKNSNLGHGTSMS). Positions 708-734 (TKNSNLGHGTSMSCEEKAPSASPPTSV) are disordered. N-linked (GlcNAc...) asparagine glycans are attached at residues N787, N801, N844, N880, N926, N1059, N1226, N1280, N1383, and N1387. Repeat unit 4 spans residues 1068–1407 (IENWGSDFLC…NPFLYTVRNS (340 aa)). Residues 1408-1450 (QILLDKAKENSNTLYWAVPVAAVGGLVVGILGMMLWRTVRLVQ) form a necessary for membrane localization region. A helical transmembrane segment spans residues 1423–1443 (WAVPVAAVGGLVVGILGMMLW). Over 1444–1450 (RTVRLVQ) the chain is Cytoplasmic.

The protein belongs to the 'GDSL' lipolytic enzyme family. Phospholipase B1 subfamily. Post-translationally, undergoes proteolytic cleavage in the ileum. As to expression, expressed in the ileum mucosa, Paneth cells spermatocytes, spermatids and sperm (at protein level). Expressed in the ileum, jejunum, esophagus and testis.

It localises to the apical cell membrane. It catalyses the reaction a 1,2-diacyl-sn-glycero-3-phosphocholine + H2O = a 1-acyl-sn-glycero-3-phosphocholine + a fatty acid + H(+). The catalysed reaction is a 1-O-alkyl-2-acyl-sn-glycero-3-phosphocholine + H2O = a 1-O-alkyl-sn-glycero-3-phosphocholine + a fatty acid + H(+). The enzyme catalyses a 1-acyl-sn-glycero-3-phosphocholine + H2O = sn-glycerol 3-phosphocholine + a fatty acid + H(+). It carries out the reaction a triacylglycerol + H2O = a diacylglycerol + a fatty acid + H(+). It catalyses the reaction 1,2-dihexadecanoyl-sn-glycero-3-phosphocholine + H2O = 1-hexadecanoyl-sn-glycero-3-phosphocholine + hexadecanoate + H(+). The catalysed reaction is 1-hexadecanoyl-2-(9Z-octadecenoyl)-sn-glycero-3-phosphocholine + H2O = 1-hexadecanoyl-sn-glycero-3-phosphocholine + (9Z)-octadecenoate + H(+). The enzyme catalyses 1,2-di-(9Z-octadecenoyl)-sn-glycero-3-phosphocholine + H2O = 1-(9Z-octadecenoyl)-sn-glycero-3-phosphocholine + (9Z)-octadecenoate + H(+). It carries out the reaction 1-hexadecanoyl-2-(9Z,12Z-octadecadienoyl)-sn-glycero-3-phosphocholine + H2O = (9Z,12Z)-octadecadienoate + 1-hexadecanoyl-sn-glycero-3-phosphocholine + H(+). It catalyses the reaction 1-hexadecanoyl-2-(9Z,12Z-octadecadienoyl)-sn-glycero-3-phosphocholine + H2O = 2-(9Z,12Z-octadecadienoyl)-sn-glycero-3-phosphocholine + hexadecanoate + H(+). The catalysed reaction is 1-hexadecanoyl-2-(9Z-octadecenoyl)-sn-glycero-3-phosphoethanolamine + H2O = 1-hexadecanoyl-sn-glycero-3-phosphoethanolamine + (9Z)-octadecenoate + H(+). The enzyme catalyses 1-hexadecanoyl-2-(9Z-octadecenoyl)-sn-glycero-3-phospho-(1'-sn-glycerol) + H2O = 1-hexadecanoyl-sn-glycero-3-phospho-(1'-sn-glycerol) + (9Z)-octadecenoate + H(+). It carries out the reaction 1,2-dihexadecanoyl-sn-glycero-3-phosphocholine + 2 H2O = sn-glycerol 3-phosphocholine + 2 hexadecanoate + 2 H(+). It catalyses the reaction 1-O-hexadecyl-2-(9Z)-octadecenoyl-sn-glycero-3-phosphocholine + H2O = 1-O-hexadecyl-sn-glycero-3-phosphocholine + (9Z)-octadecenoate + H(+). The catalysed reaction is 1-hexadecanoyl-sn-glycero-3-phosphocholine + H2O = sn-glycerol 3-phosphocholine + hexadecanoate + H(+). The enzyme catalyses 1,2,3-tri-(9Z-octadecenoyl)-glycerol + H2O = di-(9Z)-octadecenoylglycerol + (9Z)-octadecenoate + H(+). It carries out the reaction 1-hexadecanoyl-2-(9Z)-octadecenoyl-3-octadecanoyl-sn-glycerol + H2O = 1-hexadecanoyl-2-(9Z-octadecenoyl)-sn-glycerol + octadecanoate + H(+). It catalyses the reaction 1,3-dihexadecanoyl-2-(9Z-octadecenoyl)glycerol + H2O = 1,3-dihexadecanoylglycerol + (9Z)-octadecenoate + H(+). The catalysed reaction is 1,3-dihexadecanoyl-2-(9Z-octadecenoyl)glycerol + H2O = 1-hexadecanoyl-2-(9Z-octadecenoyl)-glycerol + hexadecanoate + H(+). The enzyme catalyses 1-hexadecanoyl-2-(9Z)-octadecenoyl-3-octadecanoyl-sn-glycerol + H2O = 1-hexadecanoyl-3-octadecanoyl-sn-glycerol + (9Z)-octadecenoate + H(+). It carries out the reaction 1-hexadecanoyl-2-(9Z)-octadecenoyl-3-octadecanoyl-sn-glycerol + H2O = 2-(9Z-octadecenoyl)-3-octadecanoyl-sn-glycerol + hexadecanoate + H(+). It catalyses the reaction 1-octadecanoyl-2-(9Z,12Z)-octadecadienoyl-sn-glycerol + H2O = 1-octadecanoyl-sn-glycerol + (9Z,12Z)-octadecadienoate + H(+). The catalysed reaction is 1,2-di-(9Z-octadecenoyl)-sn-glycerol + H2O = 1-(9Z-octadecenoyl)-sn-glycerol + (9Z)-octadecenoate + H(+). The enzyme catalyses 2,3-di-(9Z)-octadecenoyl-sn-glycerol + H2O = 3-(9Z-octadecenoyl)-sn-glycerol + (9Z)-octadecenoate + H(+). It carries out the reaction 1,3-di-(9Z-octadecenoyl)-glycerol + H2O = 1-(9Z-octadecenoyl)-glycerol + (9Z)-octadecenoate + H(+). It catalyses the reaction 1-(9Z-octadecenoyl)-glycerol + H2O = glycerol + (9Z)-octadecenoate + H(+). The catalysed reaction is 2-(9Z-octadecenoyl)-glycerol + H2O = glycerol + (9Z)-octadecenoate + H(+). With respect to regulation, up-regulated by bile acids such as deoxycholate. Inhibited by diisopropyl fluorophosphate. Calcium-independent membrane-associated phospholipase that catalyzes complete diacylation of phospholipids by hydrolyzing both sn-1 and sn-2 fatty acyl chains attached to the glycerol backbone (phospholipase B activity). Has dual phospholipase and lysophospholipase activities toward diacylphospholipids. Preferentially cleaves sn-2 ester bonds over sn-1 bonds. Acts as a lipase toward glycerolipid substrates. Hydrolyzes fatty acyl chains of diacylglycerols with preference for the sn-2 position and of triacylglycerols with not positional selectivity. May also hydrolyze long chain retinyl esters such as retinyl palmitate. May contribute to digestion of dietary phospholipids, glycerolipids and retinoids, facilitating lipid absorption at the brush border. The protein is Phospholipase B1, membrane-associated (Plb1) of Rattus norvegicus (Rat).